The following is a 156-amino-acid chain: Ribosomal RNA large subunit methyltransferase H (156 aa).

Residues Leu-73, Gly-104, and 123 to 128 (LSPLTL) each bind S-adenosyl-L-methionine.

Belongs to the RNA methyltransferase RlmH family. Homodimer.

The protein resides in the cytoplasm. It catalyses the reaction pseudouridine(1915) in 23S rRNA + S-adenosyl-L-methionine = N(3)-methylpseudouridine(1915) in 23S rRNA + S-adenosyl-L-homocysteine + H(+). Its function is as follows. Specifically methylates the pseudouridine at position 1915 (m3Psi1915) in 23S rRNA. The protein is Ribosomal RNA large subunit methyltransferase H of Yersinia pseudotuberculosis serotype O:1b (strain IP 31758).